Consider the following 116-residue polypeptide: Large ribosomal subunit protein bL19 (116 aa).

Belongs to the bacterial ribosomal protein bL19 family.

Functionally, this protein is located at the 30S-50S ribosomal subunit interface and may play a role in the structure and function of the aminoacyl-tRNA binding site. The chain is Large ribosomal subunit protein bL19 from Pasteurella multocida (strain Pm70).